Reading from the N-terminus, the 632-residue chain is Gamma-aminobutyric acid receptor subunit theta (632 aa).

An N-terminal signal peptide occupies residues 1–21 (MGIRGMLRAAVILLLIRTWLA). Topologically, residues 22-268 (EGNYPSPIPK…FQVQREVNSY (247 aa)) are extracellular. N-linked (GlcNAc...) asparagine glycosylation is present at Asn127. A disulfide bridge links Cys183 with Cys197. A helical membrane pass occupies residues 269–289 (LVQVYWPTVLTTITSWISFWM). The Cytoplasmic portion of the chain corresponds to 290-297 (NYDSSAAR). A helical transmembrane segment spans residues 298 to 315 (VTIGLTSMLILTTIDSHL). At 316–326 (RDKLPNISCIK) the chain is on the extracellular side. Residues 327–347 (AIDIYILVCLFFVFLSLLEYV) form a helical membrane-spanning segment. Topologically, residues 348–611 (YINYLFYSRG…DYVPKVDKWS (264 aa)) are cytoplasmic. 2 disordered regions span residues 410 to 458 (SPES…STSE) and 491 to 523 (HGVT…LHHG). Over residues 413 to 425 (SLGSLTSTSEQAQ) the composition is skewed to polar residues. A compositionally biased stretch (low complexity) spans 426–439 (LATSESLSPLTSLS). Positions 448–458 (ESLSDLPSTSE) are enriched in polar residues. Residues 491-511 (HGVTHDHEDSNESLSSDERHG) show a composition bias toward basic and acidic residues. Residues 612 to 632 (RFLFPLAFGLFNIVYWVYHMY) traverse the membrane as a helical segment.

The protein belongs to the ligand-gated ion channel (TC 1.A.9) family. Gamma-aminobutyric acid receptor (TC 1.A.9.5) subfamily. GABRQ sub-subfamily. Heteropentamer, formed by a combination of alpha (GABRA1-6), beta (GABRB1-3), gamma (GABRG1-3), delta (GABRD), epsilon (GABRE), rho (GABRR1-3), pi (GABRP) and theta (GABRQ) chains, each subunit exhibiting distinct physiological and pharmacological properties. As to expression, expressed in brain.

The protein localises to the postsynaptic cell membrane. It is found in the cell membrane. The enzyme catalyses chloride(in) = chloride(out). With respect to regulation, potentiated by etomidate, propofol, pregnanolone and pentobarbital. Its function is as follows. Theta subunit of the heteropentameric ligand-gated chloride channel gated by gamma-aminobutyric acid (GABA), a major inhibitory neurotransmitter in the brain. GABA-gated chloride channels, also named GABA(A) receptors (GABAAR), consist of five subunits arranged around a central pore and contain GABA active binding site(s) located at the alpha and beta subunit interfaces. When activated by GABA, GABAARs selectively allow the flow of chloride anions across the cell membrane down their electrochemical gradient. The polypeptide is Gamma-aminobutyric acid receptor subunit theta (Homo sapiens (Human)).